A 473-amino-acid polypeptide reads, in one-letter code: Proline transporter 1 (473 aa).

The segment covering 1–11 (MDQHQLDEENQ) has biased composition (basic and acidic residues). Positions 1–31 (MDQHQLDEENQRAALFHSSAPSSSLGADGEE) are disordered. 11 consecutive transmembrane segments (helical) span residues 65 to 85 (PWYQVGFILTTGVNSAYVLGY), 88 to 108 (SIMVPLGWIGGTCGLILAAAI), 145 to 165 (LTWALQYVNLFMINTGLIILA), 188 to 208 (IALSGFVCALFAFGIPYLSAL), 210 to 230 (IWLGLSTVFSLIYIMIAFVMS), 252 to 272 (IFTTIGAVANLVFAYNTGMLP), 290 to 310 (LWFQFTVGSLPLYAVTFMGYW), 333 to 353 (VANLSAFLQTVIALHIFASPM), 378 to 398 (VGVRGGYLTVNTLVAAMLPFL), 401 to 421 (FMSLTGALSTFPLTFVLANHM), and 437 to 457 (WHWLNVVGFSCLSVAAAVAAV).

The protein belongs to the amino acid/polyamine transporter 2 family. Amino acid/auxin permease (AAAP) (TC 2.A.18.3) subfamily. In terms of tissue distribution, expressed in roots, leaf blades and sheaths, stems and young panicle.

It is found in the cell membrane. Its function is as follows. Proline transporter that mediates proline transport across the plasma membrane when expressed in a heterologous system (Xenopus oocytes). The chain is Proline transporter 1 (PROT1) from Oryza sativa subsp. japonica (Rice).